Here is a 344-residue protein sequence, read N- to C-terminus: Protein-glutamate methylesterase/protein-glutamine glutaminase 1 (344 aa).

The Response regulatory domain maps to Arg-5–Val-122. 4-aspartylphosphate is present on Asp-56. A CheB-type methylesterase domain is found at Phe-151–Arg-343. Active-site residues include Ser-163, His-189, and Asp-285.

This sequence belongs to the CheB family. In terms of processing, phosphorylated by CheA. Phosphorylation of the N-terminal regulatory domain activates the methylesterase activity.

The protein localises to the cytoplasm. It catalyses the reaction [protein]-L-glutamate 5-O-methyl ester + H2O = L-glutamyl-[protein] + methanol + H(+). The catalysed reaction is L-glutaminyl-[protein] + H2O = L-glutamyl-[protein] + NH4(+). Involved in chemotaxis. Part of a chemotaxis signal transduction system that modulates chemotaxis in response to various stimuli. Catalyzes the demethylation of specific methylglutamate residues introduced into the chemoreceptors (methyl-accepting chemotaxis proteins or MCP) by CheR. Also mediates the irreversible deamidation of specific glutamine residues to glutamic acid. In Caulobacter vibrioides (strain ATCC 19089 / CIP 103742 / CB 15) (Caulobacter crescentus), this protein is Protein-glutamate methylesterase/protein-glutamine glutaminase 1.